The following is a 327-amino-acid chain: Biotin synthase (327 aa).

Positions 51–278 (QTIQLSTLMS…KSYVRLSAGR (228 aa)) constitute a Radical SAM core domain. 3 residues coordinate [4Fe-4S] cluster: cysteine 66, cysteine 70, and cysteine 73. [2Fe-2S] cluster is bound by residues cysteine 110, cysteine 141, cysteine 201, and arginine 273.

Belongs to the radical SAM superfamily. Biotin synthase family. In terms of assembly, homodimer. The cofactor is [4Fe-4S] cluster. [2Fe-2S] cluster serves as cofactor.

The enzyme catalyses (4R,5S)-dethiobiotin + (sulfur carrier)-SH + 2 reduced [2Fe-2S]-[ferredoxin] + 2 S-adenosyl-L-methionine = (sulfur carrier)-H + biotin + 2 5'-deoxyadenosine + 2 L-methionine + 2 oxidized [2Fe-2S]-[ferredoxin]. It participates in cofactor biosynthesis; biotin biosynthesis; biotin from 7,8-diaminononanoate: step 2/2. Functionally, catalyzes the conversion of dethiobiotin (DTB) to biotin by the insertion of a sulfur atom into dethiobiotin via a radical-based mechanism. The sequence is that of Biotin synthase from Histophilus somni (strain 2336) (Haemophilus somnus).